A 20-amino-acid chain; its full sequence is Juvenile hormone-binding protein (20 aa).

The protein localises to the secreted. Functionally, prevents juvenile hormone from being hydrolyzed by general esterases by combining with it specifically. This is Juvenile hormone-binding protein (JHBP) from Bombyx mori (Silk moth).